Consider the following 301-residue polypeptide: Homoserine O-acetyltransferase (301 aa).

Cysteine 142 acts as the Acyl-thioester intermediate in catalysis. The substrate site is built by lysine 163 and serine 192. Histidine 235 serves as the catalytic Proton acceptor. Residue glutamate 237 is part of the active site. Arginine 249 serves as a coordination point for substrate.

This sequence belongs to the MetA family. Homodimer.

It localises to the cytoplasm. It catalyses the reaction L-homoserine + acetyl-CoA = O-acetyl-L-homoserine + CoA. It participates in amino-acid biosynthesis; L-methionine biosynthesis via de novo pathway; O-acetyl-L-homoserine from L-homoserine: step 1/1. Transfers an acetyl group from acetyl-CoA to L-homoserine, forming acetyl-L-homoserine. Utilizes a ping-pong kinetic mechanism in which the acetyl group of acetyl-CoA is initially transferred to the enzyme to form an acetyl-enzyme intermediate before subsequent transfer to homoserine to form the final product, O-acetylhomoserine. Cannot use succinyl-CoA as the acyl donor. This chain is Homoserine O-acetyltransferase, found in Bacillus cereus (strain ATCC 10987 / NRS 248).